Consider the following 229-residue polypeptide: Glutamine amidotransferase-like class 1 domain-containing protein 1 (229 aa).

The N-terminal stretch at M1–A34 is a signal peptide. N-linked (GlcNAc...) asparagine glycans are attached at residues N154 and N212.

The protein belongs to the peptidase C56 family. Homotetramer. Component of the FERRY complex.

It is found in the secreted. Its subcellular location is the early endosome. Its function is as follows. Component of the FERRY complex (Five-subunit Endosomal Rab5 and RNA/ribosome intermediary). The FERRY complex directly interacts with mRNAs and RAB5A, and functions as a RAB5A effector involved in the localization and the distribution of specific mRNAs most likely by mediating their endosomal transport. The complex recruits mRNAs and ribosomes to early endosomes through direct mRNA-interaction. The protein is Glutamine amidotransferase-like class 1 domain-containing protein 1 of Xenopus laevis (African clawed frog).